We begin with the raw amino-acid sequence, 95 residues long: Alpha-conotoxin GeXXA (95 aa).

The N-terminal stretch at 1–21 (MPKQEKMMLVLLILPLPYCNA) is a signal peptide. A propeptide spanning residues 22–45 (AGVTTVQWGGHGDGLDRYLQRGVR) is cleaved from the precursor. 4 cysteine pairs are disulfide-bonded: C64-C73, C69-C81, C74-C91, and C79-C93.

Belongs to the conotoxin D superfamily. Homodimer. Pseudo-homodimer (identical sequence, different post-translational modifications). Expressed by the venom duct.

It is found in the secreted. Alpha-D-conopeptides act as non-competitive inhibitors of nicotinic acetylcholine receptors (nAChR). Through its two C-terminal domains, this homodimeric protein would bind to two nAChR allosteric sites, located outside the nAChR C-loop of the principal binding face and at the adjacent binding interface in a clockwise direction. This toxin has strong inhibitory activity on rat alpha-9-alpha-10 (CHRNA9-CHRNA10) (IC(50)=1.2 nM) and a moderate inhibitory activity on human alpha-7 (CHRNA7) (IC(50)=210 nM), rat alpha-3-beta-2 (CHRNA3-CHRNB2) (IC(50)=498 nM), rat alpha-3-beta-4 (CHRNA3-CHRNB4) (IC(50)=614 nM) and rat alpha-1-beta-1-delta-epsilon (CHRNA1-CHRNB1-CHRNE-CHRND) (IC(50)=743 nM) subtypes. Shows a weaker inhibitory activity on human alpha-9-alpha-10 (IC(50)=28 nM) than on the rat channel. This is explained by a different residue in the probable binding site (His-31 in rat alpha-10 and Leu-31 in human). The protein is Alpha-conotoxin GeXXA of Conus generalis (General cone).